The following is a 246-amino-acid chain: Phycocyanobilin:ferredoxin oxidoreductase (246 aa).

It belongs to the HY2 family.

It catalyses the reaction (2R,3Z)-phycocyanobilin + 4 oxidized [2Fe-2S]-[ferredoxin] = biliverdin IXalpha + 4 reduced [2Fe-2S]-[ferredoxin] + 4 H(+). Functionally, catalyzes the four-electron reduction of biliverdin IX-alpha (2-electron reduction at both the A and D rings); the reaction proceeds via an isolatable 2-electron intermediate, 181,182-dihydrobiliverdin. The chain is Phycocyanobilin:ferredoxin oxidoreductase from Synechococcus sp. (strain CC9902).